A 1677-amino-acid chain; its full sequence is Vitellogenin (1677 aa).

The N-terminal stretch at 1-8 (LTIALVGS) is a signal peptide. The Vitellogenin domain occupies 17-655 (FSGSKTYQYK…NAASILPSAV (639 aa)). Disordered stretches follow at residues 1089 to 1232 (TLRG…SEEI) and 1252 to 1280 (FQNKRGRMSSSSSSSSSSSSQSTLNSKQD). Over residues 1098–1122 (SSSSSSSSSSSSSSSSSSSSSSQQS) the composition is skewed to low complexity. A compositionally biased stretch (basic and acidic residues) spans 1123–1145 (RMEKRMEQDKLTENLERDRDHMR). The segment covering 1169–1196 (SSSSSSSSSSSGSNSSSSSSSSSSSSSR) has biased composition (low complexity). N-linked (GlcNAc...) asparagine glycans are attached at residues asparagine 1182, asparagine 1202, asparagine 1217, and asparagine 1218. The span at 1197 to 1212 (SHNHRNNTRTLSKSKR) shows a compositional bias: basic residues. Composition is skewed to low complexity over residues 1215-1229 (NNNNSSSSSGSSSSS) and 1260-1273 (SSSSSSSSSSSSQS). One can recognise a VWFD domain in the interval 1490–1675 (SKCVAQENKF…TATEAASFCV (186 aa)). Intrachain disulfides connect cysteine 1492–cysteine 1631 and cysteine 1515–cysteine 1674. Basic and acidic residues predominate over residues 1636 to 1649 (GERRKEFRMPDGRQ). Residues 1636–1659 (GERRKEFRMPDGRQARGPSVSPTP) are disordered.

In terms of processing, phosvitin, an egg yolk storage protein, is one of the most highly phosphorylated (10%) proteins in nature. Found in liver, testis and undifferentiated gonads of estrogen-treated fish. Not detected in the brain and spleen.

In terms of biological role, precursor of the major egg-yolk proteins that are sources of nutrients during early development of oviparous organisms. This chain is Vitellogenin, found in Acipenser transmontanus (White sturgeon).